We begin with the raw amino-acid sequence, 505 residues long: Glycerol kinase 3 (505 aa).

Thr-12 is a binding site for ADP. Thr-12, Thr-13, and Ser-14 together coordinate ATP. Thr-12 contributes to the sn-glycerol 3-phosphate binding site. Arg-16 serves as a coordination point for ADP. Sn-glycerol 3-phosphate-binding residues include Arg-82, Glu-83, Tyr-134, and Asp-249. 5 residues coordinate glycerol: Arg-82, Glu-83, Tyr-134, Asp-249, and Gln-250. Residues Thr-271 and Gly-315 each contribute to the ADP site. ATP-binding residues include Thr-271, Gly-315, Gln-319, and Gly-416. Residues Gly-416 and Asn-420 each coordinate ADP.

It belongs to the FGGY kinase family.

The catalysed reaction is glycerol + ATP = sn-glycerol 3-phosphate + ADP + H(+). The protein operates within polyol metabolism; glycerol degradation via glycerol kinase pathway; sn-glycerol 3-phosphate from glycerol: step 1/1. Its activity is regulated as follows. Inhibited by fructose 1,6-bisphosphate (FBP). Key enzyme in the regulation of glycerol uptake and metabolism. Catalyzes the phosphorylation of glycerol to yield sn-glycerol 3-phosphate. The chain is Glycerol kinase 3 from Streptomyces avermitilis (strain ATCC 31267 / DSM 46492 / JCM 5070 / NBRC 14893 / NCIMB 12804 / NRRL 8165 / MA-4680).